The following is a 617-amino-acid chain: Proline--tRNA ligase (617 aa).

Belongs to the class-II aminoacyl-tRNA synthetase family. ProS type 1 subfamily. Homodimer.

The protein localises to the cytoplasm. The catalysed reaction is tRNA(Pro) + L-proline + ATP = L-prolyl-tRNA(Pro) + AMP + diphosphate. Functionally, catalyzes the attachment of proline to tRNA(Pro) in a two-step reaction: proline is first activated by ATP to form Pro-AMP and then transferred to the acceptor end of tRNA(Pro). As ProRS can inadvertently accommodate and process non-cognate amino acids such as alanine and cysteine, to avoid such errors it has two additional distinct editing activities against alanine. One activity is designated as 'pretransfer' editing and involves the tRNA(Pro)-independent hydrolysis of activated Ala-AMP. The other activity is designated 'posttransfer' editing and involves deacylation of mischarged Ala-tRNA(Pro). The misacylated Cys-tRNA(Pro) is not edited by ProRS. This chain is Proline--tRNA ligase, found in Streptococcus agalactiae serotype III (strain NEM316).